The sequence spans 510 residues: NAD(P)H-quinone oxidoreductase subunit 2 B, chloroplastic (510 aa).

Transmembrane regions (helical) follow at residues Leu-24 to Leu-44, Ile-57 to Phe-77, Ile-99 to Ile-119, Met-124 to Cys-144, Ile-150 to Thr-170, Tyr-183 to Gly-203, Ile-229 to Phe-249, Trp-295 to Ile-315, Met-323 to Asp-343, Gly-347 to Ala-367, Ala-395 to Phe-415, Leu-418 to Leu-438, and Met-484 to Ile-504.

The protein belongs to the complex I subunit 2 family. In terms of assembly, NDH is composed of at least 16 different subunits, 5 of which are encoded in the nucleus.

The protein resides in the plastid. It is found in the chloroplast thylakoid membrane. The catalysed reaction is a plastoquinone + NADH + (n+1) H(+)(in) = a plastoquinol + NAD(+) + n H(+)(out). The enzyme catalyses a plastoquinone + NADPH + (n+1) H(+)(in) = a plastoquinol + NADP(+) + n H(+)(out). Functionally, NDH shuttles electrons from NAD(P)H:plastoquinone, via FMN and iron-sulfur (Fe-S) centers, to quinones in the photosynthetic chain and possibly in a chloroplast respiratory chain. The immediate electron acceptor for the enzyme in this species is believed to be plastoquinone. Couples the redox reaction to proton translocation, and thus conserves the redox energy in a proton gradient. This is NAD(P)H-quinone oxidoreductase subunit 2 B, chloroplastic from Ceratophyllum demersum (Rigid hornwort).